A 210-amino-acid chain; its full sequence is High mobility group protein B2 (210 aa).

The residue at position 3 (lysine 3) is an N6-acetyllysine. The segment at residues 9–79 is a DNA-binding region (HMG box 1); it reads PRGKMSSYAF…RYDREMKNYV (71 aa). At cysteine 23 the chain carries Cysteine sulfonic acid (-SO3H); alternate. Cysteine 23 and cysteine 45 are oxidised to a cystine. Lysine 30 carries the post-translational modification N6-acetyllysine. Phosphoserine is present on serine 35. Lysine 43 is subject to N6-acetyllysine. Cysteine 45 is modified (cysteine sulfonic acid (-SO3H); alternate). The segment covering 51–76 has biased composition (basic and acidic residues); it reads TMSAKEKSKFEDLAKSDKARYDREMK. The disordered stretch occupies residues 51–102; it reads TMSAKEKSKFEDLAKSDKARYDREMKNYVPPKGDKKGKKKDPNAPKRPPSAF. Position 90 is an N6-acetyllysine (lysine 90). Residues 95-163 constitute a DNA-binding region (HMG box 2); that stretch reads PKRPPSAFFL…KYEKDIAAYR (69 aa). Serine 100 is modified (phosphoserine). Residue cysteine 106 is modified to Cysteine sulfonic acid (-SO3H). N6-acetyllysine is present on residues lysine 114 and lysine 141. Residues 162-172 show a composition bias toward basic and acidic residues; it reads YRAKGKSEVGK. The tract at residues 162–210 is disordered; that stretch reads YRAKGKSEVGKKGPGRPTGSKKKNEPEDEEEEEEEEDDEDEEEEDEDEE. The required for chemotactic activity stretch occupies residues 165 to 180; it reads KGKSEVGKKGPGRPTG. Positions 187–210 are enriched in acidic residues; that stretch reads PEDEEEEEEEEDDEDEEEEDEDEE.

This sequence belongs to the HMGB family. In terms of assembly, interacts with POU2F2, POU2F1 and POU3F1. Component of the RAG complex composed of core components RAG1 and RAG2, and associated component HMGB1 or HMGB2. Component of the SET complex, composed of at least ANP32A, APEX1, HMGB2, NME1, SET and TREX1. Directly interacts with SET. Interacts with LEF1. Post-translationally, reduction/oxidation of cysteine residues Cys-23, Cys-45 and Cys-106 and a possible intramolecular disulfide bond involving Cys-23 and Cys-45 give rise to different redox forms with specific functional activities in various cellular compartments: 1- fully reduced HMGB2 (HMGB2C23hC45hC106h), 2- disulfide HMGB2 (HMGB2C23-C45C106h) and 3- sulfonyl HMGB2 (HMGB2C23soC45soC106so).

The protein resides in the nucleus. It localises to the chromosome. Its subcellular location is the cytoplasm. The protein localises to the secreted. Functionally, multifunctional protein with various roles in different cellular compartments. May act in a redox sensitive manner. In the nucleus is an abundant chromatin-associated non-histone protein involved in transcription, chromatin remodeling and V(D)J recombination and probably other processes. Binds DNA with a preference to non-canonical DNA structures such as single-stranded DNA. Can bent DNA and enhance DNA flexibility by looping thus providing a mechanism to promote activities on various gene promoters by enhancing transcription factor binding and/or bringing distant regulatory sequences into close proximity. Involved in V(D)J recombination by acting as a cofactor of the RAG complex: acts by stimulating cleavage and RAG protein binding at the 23 bp spacer of conserved recombination signal sequences (RSS). Proposed to be involved in the innate immune response to nucleic acids by acting as a cytoplasmic promiscuous immunogenic DNA/RNA sensor which cooperates with subsequent discriminative sensing by specific pattern recognition receptors. In the extracellular compartment acts as a chemokine. Promotes proliferation and migration of endothelial cells implicating AGER/RAGE. Has antimicrobial activity in gastrointestinal epithelial tissues. Involved in inflammatory response to antigenic stimulus coupled with pro-inflammatory activity. May play a role in germ cell differentiation. Involved in modulation of neurogenesis probably by regulation of neural stem proliferation. Involved in articular cartilage surface maintenance implicating LEF1 and the Wnt/beta-catenin pathway. In Rattus norvegicus (Rat), this protein is High mobility group protein B2 (Hmgb2).